Consider the following 287-residue polypeptide: Prohibitin-1 (287 aa).

The interval 102–116 (VLQLPAIYQNLGLDY) is interaction with ATG8. Residues 109–112 (YQNL) carry the AIM motif. A coiled-coil region spans residues 180 to 224 (EFTKAVEQKQIAQQDAERAKFLVEKAEQERQASVIRAEGEAESAE). The tract at residues 264-287 (SQHSGGGNSESSGSPNSLLLNIGR) is disordered. Over residues 272 to 287 (SESSGSPNSLLLNIGR) the composition is skewed to low complexity.

The protein belongs to the prohibitin family. In terms of assembly, the mitochondrial prohibitin complex consists of two subunits (PHB1 and PHB2). The subunits assemble into a membrane-associated ring-shaped supercomplex of approximately 1 mDa. The mitochondrial prohibitin complex interacts with the m-AAA protease, a heterohexamer composed of YTA12/RCA1 and YTA10/AFG3. The mitochondrial prohibitin complex interacts with ATG8 and the interaction may support mitophagosome assembly. In terms of processing, the N-terminus is blocked.

It is found in the mitochondrion inner membrane. Functionally, prohibitin probably acts as a holdase/unfoldase for the stabilization of newly synthesized mitochondrial proteins. Involved in mitophagy; may act as an adapter for ATG8 that supports mitophagosome assembly. Negatively regulates the proteolytic processing of ATG32 via the i-AAA protease. Acts as a negative regulator of the m-AAA protease. This is Prohibitin-1 (PHB1) from Saccharomyces cerevisiae (strain ATCC 204508 / S288c) (Baker's yeast).